We begin with the raw amino-acid sequence, 436 residues long: MTAHMADKPHLNMIVTGHIDNGKSTTMGHFLMDLGVVDERTIAQHAEESEKTGKGDTFKYAWVMDNIKDERERGITIDLAFQKFETPKYFFTLIDAPGHRDFIKNMITGASEADCAILVLSAKEGETDTAIAAGGQAREHAFLLKTLGVNQLIVAVNKMDDSKYSEEAYKKTVEKGEGLVKSVGYKLENVPFIPVSGWKGDNLVKRSENMPWYKGKTLLESFDDFKMAEKPVGKPLRVPIQDVYTITGVGTVPVGRVETGTMKPGDKIVVMPSGAQGEIKSIETHHTEMPSAEAGDNIGFNLRGIEKKDIKRGDVLGDPANPPKVAKEFLAQIIVIHHPTALAPGYTPVMHCHTAQVAAIMSEFVSKINPATGAVEEENPKFLKVGDSAIIKIRPVRPTPIETFKEFPEMGRFALRDMGATIAAGIVKEITEEHKV.

The 225-residue stretch at 8–232 (KPHLNMIVTG…DDFKMAEKPV (225 aa)) folds into the tr-type G domain. The interval 17–24 (GHIDNGKS) is G1. Residue 17-24 (GHIDNGKS) participates in GTP binding. Residue serine 24 participates in Mg(2+) binding. The G2 stretch occupies residues 74-78 (GITID). A G3 region spans residues 95–98 (DAPG). GTP-binding positions include 95-99 (DAPGH) and 157-160 (NKMD). The segment at 157–160 (NKMD) is G4. Residues 196 to 198 (SGW) form a G5 region.

It belongs to the TRAFAC class translation factor GTPase superfamily. Classic translation factor GTPase family. EF-Tu/EF-1A subfamily.

Its subcellular location is the cytoplasm. The enzyme catalyses GTP + H2O = GDP + phosphate + H(+). GTP hydrolase that promotes the GTP-dependent binding of aminoacyl-tRNA to the A-site of ribosomes during protein biosynthesis. The polypeptide is Elongation factor 1-alpha (Cenarchaeum symbiosum (strain A)).